Consider the following 250-residue polypeptide: Ubiquinone/menaquinone biosynthesis C-methyltransferase UbiE (250 aa).

Residues threonine 73, aspartate 94, 122–123 (NA), and serine 139 contribute to the S-adenosyl-L-methionine site.

It belongs to the class I-like SAM-binding methyltransferase superfamily. MenG/UbiE family.

The catalysed reaction is a 2-demethylmenaquinol + S-adenosyl-L-methionine = a menaquinol + S-adenosyl-L-homocysteine + H(+). It catalyses the reaction a 2-methoxy-6-(all-trans-polyprenyl)benzene-1,4-diol + S-adenosyl-L-methionine = a 5-methoxy-2-methyl-3-(all-trans-polyprenyl)benzene-1,4-diol + S-adenosyl-L-homocysteine + H(+). It functions in the pathway quinol/quinone metabolism; menaquinone biosynthesis; menaquinol from 1,4-dihydroxy-2-naphthoate: step 2/2. The protein operates within cofactor biosynthesis; ubiquinone biosynthesis. Methyltransferase required for the conversion of demethylmenaquinol (DMKH2) to menaquinol (MKH2) and the conversion of 2-polyprenyl-6-methoxy-1,4-benzoquinol (DDMQH2) to 2-polyprenyl-3-methyl-6-methoxy-1,4-benzoquinol (DMQH2). This chain is Ubiquinone/menaquinone biosynthesis C-methyltransferase UbiE, found in Francisella philomiragia subsp. philomiragia (strain ATCC 25017 / CCUG 19701 / FSC 153 / O#319-036).